We begin with the raw amino-acid sequence, 313 residues long: Sideroflexin-4 (313 aa).

2 consecutive transmembrane segments (helical) span residues Ala87 to Ile107 and Thr141 to Phe161. Lys173 carries the N6-acetyllysine modification. A run of 3 helical transmembrane segments spans residues Thr175–Ala191, Ala230–Phe247, and Phe269–Ile289.

It belongs to the sideroflexin family. As to expression, largely restricted to kidney, brain and heart.

It localises to the mitochondrion inner membrane. Mitochondrial amino-acid transporter. Does not act as a serine transporter: not able to mediate transport of serine into mitochondria. In Mus musculus (Mouse), this protein is Sideroflexin-4.